The following is a 72-amino-acid chain: Translation initiation factor IF-1 (72 aa).

The 72-residue stretch at 1-72 (MSKDDVIEMQ…SRGRITWRAK (72 aa)) folds into the S1-like domain.

The protein belongs to the IF-1 family. In terms of assembly, component of the 30S ribosomal translation pre-initiation complex which assembles on the 30S ribosome in the order IF-2 and IF-3, IF-1 and N-formylmethionyl-tRNA(fMet); mRNA recruitment can occur at any time during PIC assembly.

Its subcellular location is the cytoplasm. Functionally, one of the essential components for the initiation of protein synthesis. Stabilizes the binding of IF-2 and IF-3 on the 30S subunit to which N-formylmethionyl-tRNA(fMet) subsequently binds. Helps modulate mRNA selection, yielding the 30S pre-initiation complex (PIC). Upon addition of the 50S ribosomal subunit IF-1, IF-2 and IF-3 are released leaving the mature 70S translation initiation complex. The chain is Translation initiation factor IF-1 from Clostridium novyi (strain NT).